Here is a 339-residue protein sequence, read N- to C-terminus: DNA-directed RNA polymerase subunit alpha (339 aa).

Residues 1-233 (MVREEITGST…DLFLPFLHTE (233 aa)) are alpha N-terminal domain (alpha-NTD). Positions 264–339 (KKGIPLNCIF…IDLPKNKFSL (76 aa)) are alpha C-terminal domain (alpha-CTD).

The protein belongs to the RNA polymerase alpha chain family. In terms of assembly, in plastids the minimal PEP RNA polymerase catalytic core is composed of four subunits: alpha, beta, beta', and beta''. When a (nuclear-encoded) sigma factor is associated with the core the holoenzyme is formed, which can initiate transcription.

The protein resides in the plastid. It localises to the chloroplast. The catalysed reaction is RNA(n) + a ribonucleoside 5'-triphosphate = RNA(n+1) + diphosphate. DNA-dependent RNA polymerase catalyzes the transcription of DNA into RNA using the four ribonucleoside triphosphates as substrates. The chain is DNA-directed RNA polymerase subunit alpha from Zea mays (Maize).